The primary structure comprises 222 residues: Uracil-DNA glycosylase (222 aa).

D61 (proton acceptor) is an active-site residue.

It belongs to the uracil-DNA glycosylase (UDG) superfamily. UNG family.

It is found in the cytoplasm. The enzyme catalyses Hydrolyzes single-stranded DNA or mismatched double-stranded DNA and polynucleotides, releasing free uracil.. Excises uracil residues from the DNA which can arise as a result of misincorporation of dUMP residues by DNA polymerase or due to deamination of cytosine. The protein is Uracil-DNA glycosylase of Actinobacillus succinogenes (strain ATCC 55618 / DSM 22257 / CCUG 43843 / 130Z).